Reading from the N-terminus, the 462-residue chain is Cysteine--tRNA ligase (462 aa).

Position 29 (Cys29) interacts with Zn(2+). Residues 31–41 (PTVYDHAHIGN) carry the 'HIGH' region motif. Zn(2+) contacts are provided by Cys214, His239, and Glu243. Positions 272-276 (KMSKS) match the 'KMSKS' region motif. Lys275 is an ATP binding site.

This sequence belongs to the class-I aminoacyl-tRNA synthetase family. In terms of assembly, monomer. Zn(2+) serves as cofactor.

The protein resides in the cytoplasm. The enzyme catalyses tRNA(Cys) + L-cysteine + ATP = L-cysteinyl-tRNA(Cys) + AMP + diphosphate. This chain is Cysteine--tRNA ligase, found in Azorhizobium caulinodans (strain ATCC 43989 / DSM 5975 / JCM 20966 / LMG 6465 / NBRC 14845 / NCIMB 13405 / ORS 571).